Reading from the N-terminus, the 325-residue chain is Lipid droplet-associated hydrolase (325 aa).

Residue Ser-139 is the Nucleophile of the active site. Residues Asp-271 and His-300 each act as charge relay system in the active site.

It belongs to the AB hydrolase superfamily. LDAH family.

Its subcellular location is the lipid droplet. The protein localises to the endoplasmic reticulum. The catalysed reaction is a cholesterol ester + H2O = cholesterol + a fatty acid + H(+). Probable serine lipid hydrolase associated with lipid droplets. Has low cholesterol esterase activity. Appears to lack triglyceride lipase activity. Involved in cholesterol and triglyceride homeostasis; stimulates cellular triglyceride accumulation and cellular cholesterol release. Acts antagonistically with PNPLA2/ATGL in regulation of cellular lipid stores. May regulate triglyceride accumulation indirectly through stimulation of PNPLA2/ATGL ubiquitination and proteasomal degradation. Promotes microtubule-dependent lipid droplet fusion. Highly expressed in macrophage-rich areas in atherosclerotic lesions, suggesting that it could promote cholesterol ester turnover in macrophages. The polypeptide is Lipid droplet-associated hydrolase (Rattus norvegicus (Rat)).